Consider the following 326-residue polypeptide: N-acetyl-gamma-glutamyl-phosphate reductase (326 aa).

The active site involves Cys155.

Belongs to the NAGSA dehydrogenase family. Type 1 subfamily.

The protein localises to the cytoplasm. It catalyses the reaction N-acetyl-L-glutamate 5-semialdehyde + phosphate + NADP(+) = N-acetyl-L-glutamyl 5-phosphate + NADPH + H(+). It participates in amino-acid biosynthesis; L-arginine biosynthesis; N(2)-acetyl-L-ornithine from L-glutamate: step 3/4. Catalyzes the NADPH-dependent reduction of N-acetyl-5-glutamyl phosphate to yield N-acetyl-L-glutamate 5-semialdehyde. The protein is N-acetyl-gamma-glutamyl-phosphate reductase of Shewanella frigidimarina (strain NCIMB 400).